A 166-amino-acid polypeptide reads, in one-letter code: Regulatory protein RecX (166 aa).

This sequence belongs to the RecX family.

It localises to the cytoplasm. In terms of biological role, modulates RecA activity. The chain is Regulatory protein RecX from Shigella dysenteriae serotype 1 (strain Sd197).